A 274-amino-acid chain; its full sequence is tRNA-cytidine(32) 2-sulfurtransferase (274 aa).

Residues S40–S45 carry the PP-loop motif motif. [4Fe-4S] cluster contacts are provided by C115, C118, and C206.

The protein belongs to the TtcA family. Homodimer. The cofactor is Mg(2+). Requires [4Fe-4S] cluster as cofactor.

It localises to the cytoplasm. It carries out the reaction cytidine(32) in tRNA + S-sulfanyl-L-cysteinyl-[cysteine desulfurase] + AH2 + ATP = 2-thiocytidine(32) in tRNA + L-cysteinyl-[cysteine desulfurase] + A + AMP + diphosphate + H(+). The protein operates within tRNA modification. In terms of biological role, catalyzes the ATP-dependent 2-thiolation of cytidine in position 32 of tRNA, to form 2-thiocytidine (s(2)C32). The sulfur atoms are provided by the cysteine/cysteine desulfurase (IscS) system. In Azotobacter vinelandii (strain DJ / ATCC BAA-1303), this protein is tRNA-cytidine(32) 2-sulfurtransferase.